A 298-amino-acid chain; its full sequence is tRNA pseudouridine synthase B (298 aa).

Aspartate 39 functions as the Nucleophile in the catalytic mechanism.

It belongs to the pseudouridine synthase TruB family. Type 1 subfamily.

It carries out the reaction uridine(55) in tRNA = pseudouridine(55) in tRNA. Functionally, responsible for synthesis of pseudouridine from uracil-55 in the psi GC loop of transfer RNAs. The polypeptide is tRNA pseudouridine synthase B (Oenococcus oeni (strain ATCC BAA-331 / PSU-1)).